Here is a 227-residue protein sequence, read N- to C-terminus: Cytochrome c oxidase subunit 2 (227 aa).

The Mitochondrial intermembrane segment spans residues 1 to 14; it reads MAYPFQLGLQDATS. The helical transmembrane segment at 15 to 45 threads the bilayer; the sequence is PIMEELMNFHDHTLMIVFLISSLVLYIISLM. The Mitochondrial matrix segment spans residues 46-59; it reads LTTKLTHTSTMDAQ. The chain crosses the membrane as a helical span at residues 60–87; it reads EVETIWTILPAVILILIALPSLRILYMM. The Mitochondrial intermembrane segment spans residues 88 to 227; that stretch reads DEINNPVLTV…NFENWSASMI (140 aa). Positions 161, 196, 198, 200, 204, and 207 each coordinate Cu cation. Glu-198 contacts Mg(2+).

Belongs to the cytochrome c oxidase subunit 2 family. As to quaternary structure, component of the cytochrome c oxidase (complex IV, CIV), a multisubunit enzyme composed of 14 subunits. The complex is composed of a catalytic core of 3 subunits MT-CO1, MT-CO2 and MT-CO3, encoded in the mitochondrial DNA, and 11 supernumerary subunits COX4I, COX5A, COX5B, COX6A, COX6B, COX6C, COX7A, COX7B, COX7C, COX8 and NDUFA4, which are encoded in the nuclear genome. The complex exists as a monomer or a dimer and forms supercomplexes (SCs) in the inner mitochondrial membrane with NADH-ubiquinone oxidoreductase (complex I, CI) and ubiquinol-cytochrome c oxidoreductase (cytochrome b-c1 complex, complex III, CIII), resulting in different assemblies (supercomplex SCI(1)III(2)IV(1) and megacomplex MCI(2)III(2)IV(2)). Found in a complex with TMEM177, COA6, COX18, COX20, SCO1 and SCO2. Interacts with TMEM177 in a COX20-dependent manner. Interacts with COX20. Interacts with COX16. It depends on Cu cation as a cofactor.

It is found in the mitochondrion inner membrane. The catalysed reaction is 4 Fe(II)-[cytochrome c] + O2 + 8 H(+)(in) = 4 Fe(III)-[cytochrome c] + 2 H2O + 4 H(+)(out). Component of the cytochrome c oxidase, the last enzyme in the mitochondrial electron transport chain which drives oxidative phosphorylation. The respiratory chain contains 3 multisubunit complexes succinate dehydrogenase (complex II, CII), ubiquinol-cytochrome c oxidoreductase (cytochrome b-c1 complex, complex III, CIII) and cytochrome c oxidase (complex IV, CIV), that cooperate to transfer electrons derived from NADH and succinate to molecular oxygen, creating an electrochemical gradient over the inner membrane that drives transmembrane transport and the ATP synthase. Cytochrome c oxidase is the component of the respiratory chain that catalyzes the reduction of oxygen to water. Electrons originating from reduced cytochrome c in the intermembrane space (IMS) are transferred via the dinuclear copper A center (CU(A)) of subunit 2 and heme A of subunit 1 to the active site in subunit 1, a binuclear center (BNC) formed by heme A3 and copper B (CU(B)). The BNC reduces molecular oxygen to 2 water molecules using 4 electrons from cytochrome c in the IMS and 4 protons from the mitochondrial matrix. In Maxomys bartelsii (Bartels's Javan maxomys), this protein is Cytochrome c oxidase subunit 2 (MT-CO2).